Here is a 201-residue protein sequence, read N- to C-terminus: Protein S40-5 (201 aa).

Disordered regions lie at residues 1–39 and 134–178; these read MARG…LTEE and SIHE…EGVG. Residues 17-29 show a composition bias toward low complexity; sequence GSSYSYGDSNGNS.

This sequence belongs to the senescence regulator S40 family.

Its subcellular location is the cytoplasm. The polypeptide is Protein S40-5 (Arabidopsis thaliana (Mouse-ear cress)).